The primary structure comprises 403 residues: Tryptophan synthase beta chain 1 (403 aa).

An N6-(pyridoxal phosphate)lysine modification is found at Lys96.

The protein belongs to the TrpB family. In terms of assembly, tetramer of two alpha and two beta chains. Requires pyridoxal 5'-phosphate as cofactor.

It catalyses the reaction (1S,2R)-1-C-(indol-3-yl)glycerol 3-phosphate + L-serine = D-glyceraldehyde 3-phosphate + L-tryptophan + H2O. It functions in the pathway amino-acid biosynthesis; L-tryptophan biosynthesis; L-tryptophan from chorismate: step 5/5. In terms of biological role, the beta subunit is responsible for the synthesis of L-tryptophan from indole and L-serine. The sequence is that of Tryptophan synthase beta chain 1 (trpB1) from Wolinella succinogenes (strain ATCC 29543 / DSM 1740 / CCUG 13145 / JCM 31913 / LMG 7466 / NCTC 11488 / FDC 602W) (Vibrio succinogenes).